A 245-amino-acid polypeptide reads, in one-letter code: 3-deoxy-manno-octulosonate cytidylyltransferase (245 aa).

Belongs to the KdsB family.

The protein resides in the cytoplasm. The enzyme catalyses 3-deoxy-alpha-D-manno-oct-2-ulosonate + CTP = CMP-3-deoxy-beta-D-manno-octulosonate + diphosphate. It participates in nucleotide-sugar biosynthesis; CMP-3-deoxy-D-manno-octulosonate biosynthesis; CMP-3-deoxy-D-manno-octulosonate from 3-deoxy-D-manno-octulosonate and CTP: step 1/1. Its pathway is bacterial outer membrane biogenesis; lipopolysaccharide biosynthesis. Its function is as follows. Activates KDO (a required 8-carbon sugar) for incorporation into bacterial lipopolysaccharide in Gram-negative bacteria. The polypeptide is 3-deoxy-manno-octulosonate cytidylyltransferase (Fusobacterium nucleatum subsp. nucleatum (strain ATCC 25586 / DSM 15643 / BCRC 10681 / CIP 101130 / JCM 8532 / KCTC 2640 / LMG 13131 / VPI 4355)).